The sequence spans 281 residues: NADPH-dependent 7-cyano-7-deazaguanine reductase (281 aa).

Substrate is bound at residue 87 to 89; the sequence is IES. Residue 89-90 coordinates NADPH; it reads SK. C188 functions as the Thioimide intermediate in the catalytic mechanism. Catalysis depends on D195, which acts as the Proton donor. Residue 227–228 participates in substrate binding; the sequence is HE. Residue 256 to 257 coordinates NADPH; the sequence is RG. Residues 261 to 281 form a disordered region; sequence INPYRSTEQDKPAHNHRMARQ.

Belongs to the GTP cyclohydrolase I family. QueF type 2 subfamily. As to quaternary structure, homodimer.

It is found in the cytoplasm. The enzyme catalyses 7-aminomethyl-7-carbaguanine + 2 NADP(+) = 7-cyano-7-deazaguanine + 2 NADPH + 3 H(+). It functions in the pathway tRNA modification; tRNA-queuosine biosynthesis. In terms of biological role, catalyzes the NADPH-dependent reduction of 7-cyano-7-deazaguanine (preQ0) to 7-aminomethyl-7-deazaguanine (preQ1). The polypeptide is NADPH-dependent 7-cyano-7-deazaguanine reductase (Vibrio parahaemolyticus serotype O3:K6 (strain RIMD 2210633)).